The sequence spans 555 residues: Formate--tetrahydrofolate ligase (555 aa).

65–72 (TPAGEGKT) is a binding site for ATP.

It belongs to the formate--tetrahydrofolate ligase family.

It catalyses the reaction (6S)-5,6,7,8-tetrahydrofolate + formate + ATP = (6R)-10-formyltetrahydrofolate + ADP + phosphate. Its pathway is one-carbon metabolism; tetrahydrofolate interconversion. The chain is Formate--tetrahydrofolate ligase from Paracoccus denitrificans (strain Pd 1222).